We begin with the raw amino-acid sequence, 323 residues long: Ankyrin repeat and SOCS box protein 11 (323 aa).

6 ANK repeats span residues 64–93 (ADRS…NVNL), 97–126 (NRVS…HVNG), 130–159 (HGAT…KAQL), 162–191 (HLAS…NIDQ), 195–224 (HLGT…NVNH), and 227–256 (WLDT…NLKC). The 51-residue stretch at 273–323 (SVEQALLLREGPPALSQLCRLCVRKCLGRNCHKTIHKLYLPDPLEKFLLYQ) folds into the SOCS box domain.

The protein belongs to the ankyrin SOCS box (ASB) family. As to quaternary structure, substrate-recognition component of the ECS(ASB11) complex, composed of ASB11, CUL5, ELOB, ELOC and RNF7/RBX2.

It localises to the endoplasmic reticulum. It participates in protein modification; protein ubiquitination. Its function is as follows. Substrate-recognition component of a cullin-5-RING E3 ubiquitin-protein ligase complex (ECS complex, also named CRL5 complex), which mediates the ubiquitination and subsequent proteasomal degradation of target proteins, such as BIK, DIRAS2 and RPN1. The ECS(ASB11) complex acts as a regulator of the endoplasmic reticulum unfolded protein response by mediating ubiquitination and degradation of BIK. The chain is Ankyrin repeat and SOCS box protein 11 (ASB11) from Bos taurus (Bovine).